The primary structure comprises 237 residues: UPF0053 protein HI_0056 (237 aa).

Helical transmembrane passes span 12-32, 49-69, 90-110, 126-146, 151-171, 188-208, and 210-230; these read ISLVTLAALEIVLGIDNIIFI, ILGLALAMLTRILLLMSLAWI, ILLIGGLFLIIKSSGEIKEAI, YLGVLIQIAVLDIVFSLDSVI, MASHLPVMILAIMIAVGVMMF, ILALAFLVLVGISLIAESLDI, and IPKGYIYFAMGFSVVVEMINI.

Belongs to the UPF0053 family.

Its subcellular location is the cell membrane. The sequence is that of UPF0053 protein HI_0056 from Haemophilus influenzae (strain ATCC 51907 / DSM 11121 / KW20 / Rd).